The sequence spans 327 residues: tRNA uridine(34) hydroxylase (327 aa).

A Rhodanese domain is found at 130-224 (LDEDTVVLDT…YGKDPEVQGE (95 aa)). Cys-184 (cysteine persulfide intermediate) is an active-site residue.

Belongs to the TrhO family.

It catalyses the reaction uridine(34) in tRNA + AH2 + O2 = 5-hydroxyuridine(34) in tRNA + A + H2O. In terms of biological role, catalyzes oxygen-dependent 5-hydroxyuridine (ho5U) modification at position 34 in tRNAs. This chain is tRNA uridine(34) hydroxylase, found in Streptococcus thermophilus (strain ATCC BAA-491 / LMD-9).